A 302-amino-acid polypeptide reads, in one-letter code: Mediator of RNA polymerase II transcription subunit 6 (302 aa).

A disordered region spans residues 260–281 (ATGQTGATSRFENGSSRSSTDA).

The protein belongs to the Mediator complex subunit 6 family. Component of the Mediator complex.

Its subcellular location is the nucleus. Its function is as follows. Component of the Mediator complex, a coactivator involved in the regulated transcription of nearly all RNA polymerase II-dependent genes. Mediator functions as a bridge to convey information from gene-specific regulatory proteins to the basal RNA polymerase II transcription machinery. Mediator is recruited to promoters by direct interactions with regulatory proteins and serves as a scaffold for the assembly of a functional preinitiation complex with RNA polymerase II and the general transcription factors. The chain is Mediator of RNA polymerase II transcription subunit 6 (MED6) from Candida glabrata (strain ATCC 2001 / BCRC 20586 / JCM 3761 / NBRC 0622 / NRRL Y-65 / CBS 138) (Yeast).